The chain runs to 534 residues: Probable DNA ligase (534 aa).

An ATP-binding site is contributed by E213. The N6-AMP-lysine intermediate role is filled by K215. 6 residues coordinate ATP: R220, R235, E264, F303, R375, and K381.

Belongs to the ATP-dependent DNA ligase family. Mg(2+) is required as a cofactor.

It catalyses the reaction ATP + (deoxyribonucleotide)n-3'-hydroxyl + 5'-phospho-(deoxyribonucleotide)m = (deoxyribonucleotide)n+m + AMP + diphosphate.. Functionally, DNA ligase that seals nicks in double-stranded DNA during DNA replication, DNA recombination and DNA repair. The sequence is that of Probable DNA ligase from Mycolicibacterium vanbaalenii (strain DSM 7251 / JCM 13017 / BCRC 16820 / KCTC 9966 / NRRL B-24157 / PYR-1) (Mycobacterium vanbaalenii).